The following is a 404-amino-acid chain: Cysteine desulfurase IscS (404 aa).

Residues 75-76, Asn-155, Gln-183, and 203-205 each bind pyridoxal 5'-phosphate; these read AT and SGH. An N6-(pyridoxal phosphate)lysine modification is found at Lys-206. Thr-243 provides a ligand contact to pyridoxal 5'-phosphate. Cys-328 functions as the Cysteine persulfide intermediate in the catalytic mechanism. Cys-328 contacts [2Fe-2S] cluster.

It belongs to the class-V pyridoxal-phosphate-dependent aminotransferase family. NifS/IscS subfamily. Homodimer. Forms a heterotetramer with IscU, interacts with other sulfur acceptors. It depends on pyridoxal 5'-phosphate as a cofactor.

It localises to the cytoplasm. It carries out the reaction (sulfur carrier)-H + L-cysteine = (sulfur carrier)-SH + L-alanine. It functions in the pathway cofactor biosynthesis; iron-sulfur cluster biosynthesis. Functionally, master enzyme that delivers sulfur to a number of partners involved in Fe-S cluster assembly, tRNA modification or cofactor biosynthesis. Catalyzes the removal of elemental sulfur atoms from cysteine to produce alanine. Functions as a sulfur delivery protein for Fe-S cluster synthesis onto IscU, an Fe-S scaffold assembly protein, as well as other S acceptor proteins. In Shewanella sp. (strain MR-4), this protein is Cysteine desulfurase IscS.